Here is a 208-residue protein sequence, read N- to C-terminus: Large ribosomal subunit protein uL3 (208 aa).

Residues 134 to 159 form a disordered region; sequence SKFHREAGSTGHCTTPGRSFKNTTMP. Polar residues predominate over residues 144–158; the sequence is GHCTTPGRSFKNTTM.

Belongs to the universal ribosomal protein uL3 family. Part of the 50S ribosomal subunit. Forms a cluster with proteins L14 and L19.

One of the primary rRNA binding proteins, it binds directly near the 3'-end of the 23S rRNA, where it nucleates assembly of the 50S subunit. This Treponema denticola (strain ATCC 35405 / DSM 14222 / CIP 103919 / JCM 8153 / KCTC 15104) protein is Large ribosomal subunit protein uL3.